The primary structure comprises 74 residues: Conotoxin Vc6.11 (74 aa).

A signal peptide spans 1–19; the sequence is MEKLTILLLVAAVLMSTQA. Residues 20 to 41 constitute a propeptide that is removed on maturation; that stretch reads LIQEQRQKAKINLFSKRKPSAE. Cystine bridges form between Cys55–Cys66 and Cys61–Cys71.

The protein belongs to the conotoxin O2 superfamily. Expressed by the venom duct.

The protein resides in the secreted. In terms of biological role, inhibits voltage-gated ion channels. The polypeptide is Conotoxin Vc6.11 (Conus victoriae (Queen Victoria cone)).